The sequence spans 231 residues: Probable pseudouridine-5'-phosphatase (231 aa).

The active-site Nucleophile is the Asp-15. Asp-15 and Asp-17 together coordinate Mg(2+). The Proton donor role is filled by Asp-17.

It belongs to the HAD-like hydrolase superfamily. CbbY/CbbZ/Gph/YieH family. Mg(2+) serves as cofactor.

It carries out the reaction psi-UMP + H2O = pseudouridine + phosphate. In terms of biological role, dephosphorylates pseudouridine 5'-phosphate, a potential intermediate in rRNA degradation. The protein is Probable pseudouridine-5'-phosphatase (Gs1l) of Drosophila melanogaster (Fruit fly).